A 739-amino-acid chain; its full sequence is Long-chain-fatty-acid--CoA ligase ACSBG2 (739 aa).

Residues 287–295, 478–483, aspartate 556, arginine 571, and lysine 684 contribute to the ATP site; these read TSGTTGQPK and ELYGMS.

This sequence belongs to the ATP-dependent AMP-binding enzyme family. Bubblegum subfamily.

The protein localises to the cytoplasm. It carries out the reaction a long-chain fatty acid + ATP + CoA = a long-chain fatty acyl-CoA + AMP + diphosphate. The catalysed reaction is (5Z,8Z,11Z,14Z)-eicosatetraenoate + ATP + CoA = (5Z,8Z,11Z,14Z)-eicosatetraenoyl-CoA + AMP + diphosphate. The enzyme catalyses hexadecanoate + ATP + CoA = hexadecanoyl-CoA + AMP + diphosphate. It catalyses the reaction (9Z)-octadecenoate + ATP + CoA = (9Z)-octadecenoyl-CoA + AMP + diphosphate. It carries out the reaction (9Z,12Z)-octadecadienoate + ATP + CoA = (9Z,12Z)-octadecadienoyl-CoA + AMP + diphosphate. The catalysed reaction is tetracosanoate + ATP + CoA = tetracosanoyl-CoA + AMP + diphosphate. In terms of biological role, catalyzes the conversion of fatty acids such as long chain and very long-chain fatty acids to their active form acyl-CoAs for both synthesis of cellular lipids, and degradation via beta-oxidation. Can activate diverse saturated, monosaturated and polyunsaturated fatty acids. This chain is Long-chain-fatty-acid--CoA ligase ACSBG2, found in Xenopus laevis (African clawed frog).